The chain runs to 238 residues: Carboxymethylenebutenolidase (238 aa).

Catalysis depends on residues Cys-123, Asp-171, and His-201.

The protein belongs to the dienelactone hydrolase family. In terms of assembly, monomer.

It carries out the reaction 2-(5-oxo-2,5-dihydrofuran-2-ylidene)acetate + H2O = 4-oxohex-2-enedioate + H(+). The protein operates within aromatic compound metabolism; 3-chlorocatechol degradation. Ring cleavage of cyclic ester dienelactone to produce maleylacetate. This is Carboxymethylenebutenolidase (tcbE) from Pseudomonas sp. (strain P51).